A 500-amino-acid chain; its full sequence is L-arabinose isomerase (500 aa).

Residues glutamate 306, glutamate 333, histidine 349, and histidine 448 each coordinate Mn(2+).

Belongs to the arabinose isomerase family. It depends on Mn(2+) as a cofactor.

It carries out the reaction beta-L-arabinopyranose = L-ribulose. The protein operates within carbohydrate degradation; L-arabinose degradation via L-ribulose; D-xylulose 5-phosphate from L-arabinose (bacterial route): step 1/3. Catalyzes the conversion of L-arabinose to L-ribulose. The polypeptide is L-arabinose isomerase (Shewanella sp. (strain ANA-3)).